We begin with the raw amino-acid sequence, 1032 residues long: Connector enhancer of kinase suppressor of ras 2 (1032 aa).

The SAM domain maps to 11-76; that stretch reads WSPSQVVDWM…LEAVDLLCAL (66 aa). Ser12 is subject to Phosphoserine. The 95-residue stretch at 84–178 folds into the CRIC domain; sequence NLKTLSHKLN…TIVQQDCTVY (95 aa). In terms of domain architecture, PDZ spans 215-297; sequence VIQLANIKPS…GVILTLKKRP (83 aa). A compositionally biased stretch (low complexity) spans 324 to 340; sequence RSPTSSVATPSSTISTP. The disordered stretch occupies residues 324–349; it reads RSPTSSVATPSSTISTPTKRDSSALQ. A DUF1170 domain is found at 332–515; it reads TPSSTISTPT…PTHYSLLPSL (184 aa). Phosphoserine is present on residues Ser338 and Ser390. The tract at residues 480–509 is disordered; the sequence is EEYMFQRNSKKDTGKKSKKKGDKSTSPTHY. The 100-residue stretch at 570 to 669 folds into the PH domain; it reads RGDCEGWLWK…WLNRINMLTA (100 aa). Residues 682–766 form a disordered region; it reads DYWSESDKEE…PIRKTASQRR (85 aa). A Phosphotyrosine modification is found at Tyr683. Residues 683–693 are compositionally biased toward acidic residues; it reads YWSESDKEEAD. Phosphoserine occurs at positions 685 and 687. A compositionally biased stretch (pro residues) spans 701–714; sequence DSPPPPYDTYPRPP. Residues 730 to 740 show a composition bias toward low complexity; sequence LSSTETSQSQS. Residues Ser756 and Ser767 each carry the phosphoserine modification. The segment at 866-900 is disordered; sequence DPQDDIQPPEVEEEEEEEEEEAAGENIGEKNENRE. A coiled-coil region spans residues 874 to 917; that stretch reads PEVEEEEEEEEEEAAGENIGEKNENREEKLGDSLQDLYRALEEA. The span at 875–888 shows a compositional bias: acidic residues; that stretch reads EVEEEEEEEEEEAA. Phosphoserine is present on Ser906.

The protein belongs to the CNKSR family. In terms of assembly, interacts with RAF1, RAB2L and RAL GTPase proteins. Interacts with DLG4 and AIP1. Phosphorylated on tyrosine. In terms of tissue distribution, expressed in neurons and localized in the cell body and neurites.

The protein localises to the cytoplasm. The protein resides in the membrane. Functionally, may function as an adapter protein or regulator of Ras signaling pathways, in synaptic junctions. The chain is Connector enhancer of kinase suppressor of ras 2 (Cnksr2) from Rattus norvegicus (Rat).